A 491-amino-acid chain; its full sequence is GTPase Der (491 aa).

EngA-type G domains follow at residues 54–217 (PVLA…PEYS) and 229–402 (RRIA…ESWD). Residues 60-67 (GRPNVGKS), 107-111 (DTGGW), 169-172 (NKVD), 235-242 (GRPNVGKS), 282-286 (DTAGI), and 347-350 (NKWD) each bind GTP. The KH-like domain maps to 403-485 (RRIPTGRLNA…PIEVNMRVRE (83 aa)).

This sequence belongs to the TRAFAC class TrmE-Era-EngA-EngB-Septin-like GTPase superfamily. EngA (Der) GTPase family. Associates with the 50S ribosomal subunit.

Its function is as follows. GTPase that plays an essential role in the late steps of ribosome biogenesis. The sequence is that of GTPase Der from Paenarthrobacter aurescens (strain TC1).